The following is a 396-amino-acid chain: Ornithine aminotransferase (396 aa).

Lys255 is subject to N6-(pyridoxal phosphate)lysine.

It belongs to the class-III pyridoxal-phosphate-dependent aminotransferase family. OAT subfamily. It depends on pyridoxal 5'-phosphate as a cofactor.

The protein localises to the cytoplasm. The catalysed reaction is a 2-oxocarboxylate + L-ornithine = L-glutamate 5-semialdehyde + an L-alpha-amino acid. Its pathway is amino-acid biosynthesis; L-proline biosynthesis; L-glutamate 5-semialdehyde from L-ornithine: step 1/1. Catalyzes the interconversion of ornithine to glutamate semialdehyde. The protein is Ornithine aminotransferase of Bacillus cereus (strain Q1).